We begin with the raw amino-acid sequence, 312 residues long: Malate dehydrogenase (312 aa).

NAD(+)-binding positions include 7-13 (GAAGGIG) and Asp34. Substrate contacts are provided by Arg81 and Arg87. NAD(+) contacts are provided by residues Asn94 and 117 to 119 (ITN). Substrate is bound by residues Asn119 and Arg153. The Proton acceptor role is filled by His177. Met227 serves as a coordination point for NAD(+).

The protein belongs to the LDH/MDH superfamily. MDH type 1 family. As to quaternary structure, homodimer.

It catalyses the reaction (S)-malate + NAD(+) = oxaloacetate + NADH + H(+). In terms of biological role, catalyzes the reversible oxidation of malate to oxaloacetate. This is Malate dehydrogenase from Salmonella newport (strain SL254).